Consider the following 87-residue polypeptide: Beta-defensin 109C (87 aa).

A signal peptide spans 1-22; the sequence is MRLHLLLLILLLFSILLSPVRG. 3 cysteine pairs are disulfide-bonded: Cys31/Cys59, Cys38/Cys53, and Cys43/Cys60.

The protein belongs to the beta-defensin family.

It localises to the secreted. Functionally, has antibacterial activity. The sequence is that of Beta-defensin 109C (DEFB109C) from Homo sapiens (Human).